The primary structure comprises 349 residues: MSLIEDLKALKATAVARINATEADVEALRVSLLGKKGELTALLKGMKDVAPEERKTVGEIGNDVRQTITTLLAQKKAAEETARLNEQLAAETIDVTLPGSAHQVGQPHVLQQIIDEIEQHFLGLGFEIIDDIVDSPEVETDEYNFERENLPKDHPARDMQDTFYITPEILLRTQTSPVQSRSLEKHDFSKGPLKMIAPGKVYRRDTDDATHSHQFHQVEGMVVGENITMADLKGTLLSIMQKLFGEKHQIRMRPSYFPFTEPSVEVDVSWNEVTPDMKPEDIEWIEVLGAGMTHPNVLRMDGIDPEKYSAFAFGLGPDRFAMLKYGVDDIRQFYLNDVRFLSQFNRKGN.

Residue glutamate 261 coordinates Mg(2+).

Belongs to the class-II aminoacyl-tRNA synthetase family. Phe-tRNA synthetase alpha subunit type 1 subfamily. Tetramer of two alpha and two beta subunits. Requires Mg(2+) as cofactor.

The protein resides in the cytoplasm. It carries out the reaction tRNA(Phe) + L-phenylalanine + ATP = L-phenylalanyl-tRNA(Phe) + AMP + diphosphate + H(+). The chain is Phenylalanine--tRNA ligase alpha subunit from Leuconostoc citreum (strain KM20).